Here is a 251-residue protein sequence, read N- to C-terminus: Cytochrome c oxidase subunit 2 (251 aa).

Residues 1-15 (MLNLLYNQIFNVILN) form the signal peptide. Topologically, residues 16-41 (DVPTPYNTYFQDSATPNQEGILELHD) are mitochondrial intermembrane. A helical membrane pass occupies residues 42 to 62 (NIMFYLLVILGLVSWLLFTIT). Residues 63–82 (RTYSKNPIAYKYIKHGQTIE) are Mitochondrial matrix-facing. Residues 83-103 (IIWTIFPAVILLIIAFPSFIL) traverse the membrane as a helical segment. Residues 104–251 (LYLCDEVISP…PAFLEWLNEQ (148 aa)) lie on the Mitochondrial intermembrane side of the membrane. Cu cation contacts are provided by histidine 186, cysteine 221, glutamate 223, cysteine 225, histidine 229, and methionine 232. Glutamate 223 is a Mg(2+) binding site.

It belongs to the cytochrome c oxidase subunit 2 family. As to quaternary structure, component of the cytochrome c oxidase (complex IV, CIV), a multisubunit enzyme composed of a catalytic core of 3 subunits and several supernumerary subunits. The complex exists as a monomer or a dimer and forms supercomplexes (SCs) in the inner mitochondrial membrane with ubiquinol-cytochrome c oxidoreductase (cytochrome b-c1 complex, complex III, CIII). Requires Cu cation as cofactor. The signal sequence of COX2 is processed by IMP1.

Its subcellular location is the mitochondrion inner membrane. The catalysed reaction is 4 Fe(II)-[cytochrome c] + O2 + 8 H(+)(in) = 4 Fe(III)-[cytochrome c] + 2 H2O + 4 H(+)(out). Functionally, component of the cytochrome c oxidase, the last enzyme in the mitochondrial electron transport chain which drives oxidative phosphorylation. The respiratory chain contains 3 multisubunit complexes succinate dehydrogenase (complex II, CII), ubiquinol-cytochrome c oxidoreductase (cytochrome b-c1 complex, complex III, CIII) and cytochrome c oxidase (complex IV, CIV), that cooperate to transfer electrons derived from NADH and succinate to molecular oxygen, creating an electrochemical gradient over the inner membrane that drives transmembrane transport and the ATP synthase. Cytochrome c oxidase is the component of the respiratory chain that catalyzes the reduction of oxygen to water. Electrons originating from reduced cytochrome c in the intermembrane space (IMS) are transferred via the dinuclear copper A center (CU(A)) of subunit 2 and heme A of subunit 1 to the active site in subunit 1, a binuclear center (BNC) formed by heme A3 and copper B (CU(B)). The BNC reduces molecular oxygen to 2 water molecules using 4 electrons from cytochrome c in the IMS and 4 protons from the mitochondrial matrix. The chain is Cytochrome c oxidase subunit 2 (COX2) from Lachancea thermotolerans (strain ATCC 56472 / CBS 6340 / NRRL Y-8284) (Yeast).